Reading from the N-terminus, the 191-residue chain is Ribonuclease HII (191 aa).

Residues 16 to 191 (INLIGIDEAG…KLHRKSFKLL (176 aa)) enclose the RNase H type-2 domain. Positions 22, 23, and 110 each coordinate a divalent metal cation.

This sequence belongs to the RNase HII family. Requires Mn(2+) as cofactor. Mg(2+) serves as cofactor.

It is found in the cytoplasm. It catalyses the reaction Endonucleolytic cleavage to 5'-phosphomonoester.. Functionally, endonuclease that specifically degrades the RNA of RNA-DNA hybrids. The polypeptide is Ribonuclease HII (Campylobacter jejuni subsp. doylei (strain ATCC BAA-1458 / RM4099 / 269.97)).